Here is a 314-residue protein sequence, read N- to C-terminus: Chitinase 1 (314 aa).

Positions 1–26 are cleaved as a signal peptide; the sequence is MASVSPSSLLLLFFALLSPLLPLTSA. A GH18 domain is found at 27 to 296; the sequence is LVFREYIGSQ…NVFRYEMQAQ (270 aa). Glutamate 151 serves as the catalytic Proton donor.

It belongs to the glycosyl hydrolase 18 family. Chitinase class II subfamily.

It catalyses the reaction Random endo-hydrolysis of N-acetyl-beta-D-glucosaminide (1-&gt;4)-beta-linkages in chitin and chitodextrins.. Able to cleave glycolchitin. The protein is Chitinase 1 of Tulipa saxatilis subsp. bakeri (Tulip).